Consider the following 928-residue polypeptide: Sodium/calcium exchanger 3 (928 aa).

Positions 1 to 30 (MAWLRLQPLTSAFLHFGLVTFVLFLNCLRA) are cleaved as a signal peptide. Over 31 to 73 (EAGDSGDVPSAGQNNESCSGSSDCKEGVILPIWYPENPSLGDK) the chain is Extracellular. N45 is a glycosylation site (N-linked (GlcNAc...) asparagine). Residues 74 to 94 (IARVIVYFVALIYMFLGVSII) form a helical membrane-spanning segment. At 95–147 (ADRFMASIEVITSQEREVTIKKPNGETSTTTIRVWNETVSNLTLMALGSSAPE) the chain is on the cytoplasmic side. A helical transmembrane segment spans residues 148-168 (ILLSLIEVCGHGFIAGDLGPS). T169 is a topological domain (extracellular). Residues 170 to 190 (IVGSAAFNMFIIIGICVYVIP) traverse the membrane as a helical segment. Residues 191-201 (DGETRKIKHLR) are Cytoplasmic-facing. Residues 202-222 (VFFVTAAWSIFAYIWLYMILA) traverse the membrane as a helical segment. At 223 to 230 (VFSPGVVQ) the chain is on the extracellular side. Residues 231-251 (VWEGLLTLFFFPVCVLLAWVA) traverse the membrane as a helical segment. The Cytoplasmic portion of the chain corresponds to 252–727 (DKRLLFYKYM…DESGEERLPS (476 aa)). Positions 253–272 (KRLLFYKYMHKKYRTDKHRG) are putative calmodulin-binding region. 2 Calx-beta domains span residues 390 to 485 (EPED…VRLS) and 519 to 618 (ATVT…VIEM). Ca(2+) contacts are provided by E409, D445, D470, D471, I473, E475, E478, D525, D526, D527, E543, D579, D605, and E673. A helical transmembrane segment spans residues 728–748 (CFDYVMHFLTVFWKVLFACVP). The Extracellular segment spans residues 749-755 (PTEYCHG). The helical transmembrane segment at 756–776 (WACFVVSILIIGMLTAIIGDL) threads the bilayer. At 777-779 (ASH) the chain is on the cytoplasmic side. Residues 780 to 800 (FGCTIGLKDSVTAVVFVAFGT) traverse the membrane as a helical segment. At 801 to 829 (SVPDTFASKAAALQDVYADASIGNVTGSN) the chain is on the extracellular side. N824 is a glycosylation site (N-linked (GlcNAc...) asparagine). The helical transmembrane segment at 830 to 850 (AVNVFLGIGLAWSVAAIYWAM) threads the bilayer. The Cytoplasmic portion of the chain corresponds to 851–861 (QGQEFHVSAGT). The chain crosses the membrane as a helical span at residues 862 to 882 (LAFSVTLFTIFAFVCLSVLLY). Topologically, residues 883–904 (RRRPHLGGELGGPRGCKLATTW) are extracellular. The chain crosses the membrane as a helical span at residues 905–925 (LFVSLWLLYILFATLEAYCYI). Residues 926 to 928 (KGF) lie on the Cytoplasmic side of the membrane.

Belongs to the Ca(2+):cation antiporter (CaCA) (TC 2.A.19) family. SLC8 subfamily. Interacts with AKAP1. As to expression, detected in gray and white matter in the spinal cord. Detected in hippocampus neurons. Detected in brain cortex neurons. Detected in skeletal muscle (at protein level). Isoform 1 and isoform 2 are highly expressed in brain; levels are higher for isoform 2. Isoform 1 and isoform 2 are detected in soleus muscle; levels are higher for isoform 1. Detected in gastrocnemius muscle.

The protein localises to the cell membrane. The protein resides in the perikaryon. It localises to the cell projection. It is found in the dendrite. Its subcellular location is the dendritic spine. The protein localises to the sarcolemma. The protein resides in the cytoplasm. It localises to the sarcoplasm. It is found in the cell junction. Its subcellular location is the mitochondrion outer membrane. The protein localises to the perinuclear region. The protein resides in the endoplasmic reticulum membrane. It carries out the reaction Ca(2+)(in) + 3 Na(+)(out) = Ca(2+)(out) + 3 Na(+)(in). With respect to regulation, calcium transport is stimulated by cytoplasmic Ca(2+) and is inhibited by Na(+). Isoform 1 is more sensitive to stimulation by Ca(2+) than isoform 2. Isoform 2 is more sensitive to inactivation by Na(+). Functionally, mediates the electrogenic exchange of Ca(2+) against Na(+) ions across the cell membrane, and thereby contributes to the regulation of cytoplasmic Ca(2+) levels and Ca(2+)-dependent cellular processes. Contributes to cellular Ca(2+) homeostasis in excitable cells, both in muscle and in brain. In a first phase, voltage-gated channels mediate the rapid increase of cytoplasmic Ca(2+) levels due to release of Ca(2+) stores from the endoplasmic reticulum. SLC8A3 mediates the export of Ca(2+) from the cell during the next phase, so that cytoplasmic Ca(2+) levels rapidly return to baseline. Contributes to Ca(2+) transport during excitation-contraction coupling in muscle. In neurons, contributes to the rapid decrease of cytoplasmic Ca(2+) levels back to baseline after neuronal activation, and thereby contributes to modulate synaptic plasticity, learning and memory. Required for normal oligodendrocyte differentiation and for normal myelination. Mediates Ca(2+) efflux from mitochondria and contributes to mitochondrial Ca(2+) ion homeostasis. Isoform 1 displays higher calcium exchanger activity than isoform 2, probably because isoform 1 has a lower threshold for activation by cytoplasmic Ca(2+). The polypeptide is Sodium/calcium exchanger 3 (Mus musculus (Mouse)).